Reading from the N-terminus, the 80-residue chain is Cytochrome c oxidase subunit 7B, mitochondrial (80 aa).

The N-terminal 24 residues, 1 to 24 (MLPLAKNALSRLQVRSIQQVVARQ), are a transit peptide targeting the mitochondrion. Topologically, residues 25–39 (SHQKRAPSFHDKYGN) are mitochondrial matrix. Residues 40-60 (AILAGGAIFCVSTWTYTATQI) form a helical membrane-spanning segment. The Mitochondrial intermembrane portion of the chain corresponds to 61–80 (GIEWNMSPVGRVTPKEWRDQ).

It belongs to the cytochrome c oxidase VIIb family. As to quaternary structure, component of the cytochrome c oxidase (complex IV, CIV), a multisubunit enzyme composed of 14 subunits. The complex is composed of a catalytic core of 3 subunits MT-CO1, MT-CO2 and MT-CO3, encoded in the mitochondrial DNA, and 11 supernumerary subunits COX4I, COX5A, COX5B, COX6A, COX6B, COX6C, COX7A, COX7B, COX7C, COX8 and NDUFA4, which are encoded in the nuclear genome. The complex exists as a monomer or a dimer and forms supercomplexes (SCs) in the inner mitochondrial membrane with NADH-ubiquinone oxidoreductase (complex I, CI) and ubiquinol-cytochrome c oxidoreductase (cytochrome b-c1 complex, complex III, CIII), resulting in different assemblies (supercomplex SCI(1)III(2)IV(1) and megacomplex MCI(2)III(2)IV(2)).

It is found in the mitochondrion inner membrane. It functions in the pathway energy metabolism; oxidative phosphorylation. Functionally, component of the cytochrome c oxidase, the last enzyme in the mitochondrial electron transport chain which drives oxidative phosphorylation. The respiratory chain contains 3 multisubunit complexes succinate dehydrogenase (complex II, CII), ubiquinol-cytochrome c oxidoreductase (cytochrome b-c1 complex, complex III, CIII) and cytochrome c oxidase (complex IV, CIV), that cooperate to transfer electrons derived from NADH and succinate to molecular oxygen, creating an electrochemical gradient over the inner membrane that drives transmembrane transport and the ATP synthase. Cytochrome c oxidase is the component of the respiratory chain that catalyzes the reduction of oxygen to water. Electrons originating from reduced cytochrome c in the intermembrane space (IMS) are transferred via the dinuclear copper A center (CU(A)) of subunit 2 and heme A of subunit 1 to the active site in subunit 1, a binuclear center (BNC) formed by heme A3 and copper B (CU(B)). The BNC reduces molecular oxygen to 2 water molecules using 4 electrons from cytochrome c in the IMS and 4 protons from the mitochondrial matrix. Plays a role in proper central nervous system (CNS) development in vertebrates. The sequence is that of Cytochrome c oxidase subunit 7B, mitochondrial (Cox7b) from Mus musculus (Mouse).